The following is a 350-amino-acid chain: Putative [LysW]-lysine/[LysW]-ornithine hydrolase (350 aa).

H72 contributes to the Zn(2+) binding site. Residue D74 is part of the active site. D96 is a Zn(2+) binding site. The Proton acceptor role is filled by E128. 3 residues coordinate Zn(2+): E129, E152, and H321.

The protein belongs to the peptidase M20A family. LysK subfamily. Zn(2+) is required as a cofactor. It depends on Co(2+) as a cofactor.

It is found in the cytoplasm. The catalysed reaction is [amino-group carrier protein]-C-terminal-gamma-(L-lysyl)-L-glutamate + H2O = [amino-group carrier protein]-C-terminal-L-glutamate + L-lysine. It carries out the reaction [amino-group carrier protein]-C-terminal-gamma-(L-ornithyl)-L-glutamate + H2O = [amino-group carrier protein]-C-terminal-L-glutamate + L-ornithine. The protein operates within amino-acid biosynthesis; L-lysine biosynthesis via AAA pathway; L-lysine from L-alpha-aminoadipate (Thermus route): step 5/5. It functions in the pathway amino-acid biosynthesis; L-arginine biosynthesis. Catalyzes the release of L-lysine from [LysW]-gamma-L-lysine and the release of L-ornithine from [LysW]-L-ornithine. This Aeropyrum pernix (strain ATCC 700893 / DSM 11879 / JCM 9820 / NBRC 100138 / K1) protein is Putative [LysW]-lysine/[LysW]-ornithine hydrolase.